The following is a 139-amino-acid chain: Putative nickel-responsive regulator (139 aa).

Ni(2+) is bound by residues His79, His90, His92, and Cys98.

This sequence belongs to the transcriptional regulatory CopG/NikR family. The cofactor is Ni(2+).

Transcriptional regulator. In Nitratidesulfovibrio vulgaris (strain DSM 19637 / Miyazaki F) (Desulfovibrio vulgaris), this protein is Putative nickel-responsive regulator.